Reading from the N-terminus, the 593-residue chain is A-type ATP synthase subunit A (593 aa).

An ATP-binding site is contributed by 236 to 243 (GPFGSGKT).

Belongs to the ATPase alpha/beta chains family. As to quaternary structure, has multiple subunits with at least A(3), B(3), C, D, E, F, H, I and proteolipid K(x).

Its subcellular location is the cell membrane. It carries out the reaction ATP + H2O + 4 H(+)(in) = ADP + phosphate + 5 H(+)(out). Produces ATP from ADP in the presence of a proton gradient across the membrane. The archaeal alpha chain is a catalytic subunit. In terms of biological role, component of the A-type ATP synthase that produces ATP from ADP in the presence of a proton gradient across the membrane. The A chain is the catalytic subunit. This chain is A-type ATP synthase subunit A, found in Pyrobaculum aerophilum (strain ATCC 51768 / DSM 7523 / JCM 9630 / CIP 104966 / NBRC 100827 / IM2).